We begin with the raw amino-acid sequence, 281 residues long: Probable endonuclease 4 (281 aa).

The Zn(2+) site is built by histidine 69, histidine 109, glutamate 145, aspartate 179, histidine 182, histidine 216, aspartate 229, histidine 231, and glutamate 261.

It belongs to the AP endonuclease 2 family. Zn(2+) serves as cofactor.

It carries out the reaction Endonucleolytic cleavage to 5'-phosphooligonucleotide end-products.. Endonuclease IV plays a role in DNA repair. It cleaves phosphodiester bonds at apurinic or apyrimidinic (AP) sites, generating a 3'-hydroxyl group and a 5'-terminal sugar phosphate. In Nautilia profundicola (strain ATCC BAA-1463 / DSM 18972 / AmH), this protein is Probable endonuclease 4.